Here is a 121-residue protein sequence, read N- to C-terminus: Phospholipase A2 homolog ECO_00035 (121 aa).

Cystine bridges form between cysteine 25/cysteine 114, cysteine 27/cysteine 43, cysteine 42/cysteine 94, cysteine 48/cysteine 121, cysteine 49/cysteine 87, cysteine 56/cysteine 80, and cysteine 74/cysteine 85. The interval lysine 104 to glycine 116 is important for membrane-damaging activities in eukaryotes and bacteria; heparin-binding.

Belongs to the phospholipase A2 family. Group II subfamily. S49 sub-subfamily. Monomer. Expressed by the venom gland.

The protein localises to the secreted. Its function is as follows. Snake venom phospholipase A2 homolog that lacks enzymatic activity. Shows high myotoxin activities and displays edema-inducing activities. Has cytotoxic activities against HUVEC cells (LC(50)=4.9 uL) and human lung adenocarcinoma A549 cells (LC(50)=3.5 uL). The chain is Phospholipase A2 homolog ECO_00035 from Echis coloratus (Carpet viper).